The sequence spans 961 residues: Gamma-tubulin small complex component GCP2 (961 aa).

Residues 15 to 76 form a disordered region; that stretch reads NLHRSPKLAT…KPSIPPLKSE (62 aa). Positions 43–54 are enriched in polar residues; sequence LGSNVVSHPTRS. Positions 55 to 65 are enriched in basic and acidic residues; the sequence is SPEKTTDKPAD.

Belongs to the TUBGCP family. In terms of assembly, component of the gamma-tubulin small complex (gamma-TuSC) composed of tubulin gamma chain, gamma-tubulin complex protein 2 (GCP2) and gamma-tubulin complex protein 3 (GCP3). Interacts with tubulin gamma chain.

The protein localises to the cytoplasm. It is found in the cytoskeleton. Its subcellular location is the flagellum axoneme. It localises to the flagellum basal body. Its function is as follows. Component of the gamma-tubulin small complex (gamma-TuSC) involved in microtubule (MT) nucleation for the formation of median bodies and in the biogenesis of flagella. Gamma-TuSC may be required for the correct positioning of EB1 within the trophozoites. This Giardia intestinalis (strain ATCC 50803 / WB clone C6) (Giardia lamblia) protein is Gamma-tubulin small complex component GCP2.